The sequence spans 391 residues: MKESIFSKKRILLLGSGELGKELVIESKRLGLEVIAIDRYEKAPAMQVADYSRVIEMGDKNILKNVIKEFKPDYVVPEIEALSIEALKELEDEGFNIVPNARTVEITMNRDKIRDLASKDLKIKTAKFDYIFEFDDLEKKADEIGFPLLLKPLMSSSGKGQSLVETKNDLQNAWKQAQANSRGKVKGVIIEEFINFDFEFTLLTVRKENGENIFCLPIGHLQSNGDYQCSWQPLEIKESLIIEAKRMTSRILNNLNGAGLYGVEFFIKGSEVIFSELSPRPHDTGMVTLVSQNINEFELHLRAFLNLPIPRIDLIEPSATRVILSNQEYLNPIYEGLYEALEFEKTKVLIFGKPVSRKGRRMGVVLSSNTDINLARKNADEAALKIKVSTT.

Residues 18 to 19 and Glu78 contribute to the N(1)-(5-phospho-beta-D-ribosyl)glycinamide site; that span reads EL. Residues Arg110, Lys151, 156-161, 191-194, and Glu199 each bind ATP; these read SSGKGQ and EEFI. Positions 115–305 constitute an ATP-grasp domain; the sequence is DLASKDLKIK…EFELHLRAFL (191 aa). Mg(2+)-binding residues include Glu264 and Glu276. N(1)-(5-phospho-beta-D-ribosyl)glycinamide contacts are provided by residues Asp283, Lys353, and 360-361; that span reads RR.

It belongs to the PurK/PurT family. As to quaternary structure, homodimer.

The catalysed reaction is N(1)-(5-phospho-beta-D-ribosyl)glycinamide + formate + ATP = N(2)-formyl-N(1)-(5-phospho-beta-D-ribosyl)glycinamide + ADP + phosphate + H(+). Its pathway is purine metabolism; IMP biosynthesis via de novo pathway; N(2)-formyl-N(1)-(5-phospho-D-ribosyl)glycinamide from N(1)-(5-phospho-D-ribosyl)glycinamide (formate route): step 1/1. Functionally, involved in the de novo purine biosynthesis. Catalyzes the transfer of formate to 5-phospho-ribosyl-glycinamide (GAR), producing 5-phospho-ribosyl-N-formylglycinamide (FGAR). Formate is provided by PurU via hydrolysis of 10-formyl-tetrahydrofolate. The protein is Formate-dependent phosphoribosylglycinamide formyltransferase of Prochlorococcus marinus (strain AS9601).